The chain runs to 258 residues: Large ribosomal subunit protein uL2x (258 aa).

Positions 211 to 231 are disordered; the sequence is HGGGNHQHIGHASTVRRDAPP.

This sequence belongs to the universal ribosomal protein uL2 family.

The protein is Large ribosomal subunit protein uL2x (RPL8C) of Arabidopsis thaliana (Mouse-ear cress).